Consider the following 240-residue polypeptide: Probable transcriptional regulatory protein Csal_0810 (240 aa).

This sequence belongs to the TACO1 family.

It localises to the cytoplasm. This Chromohalobacter salexigens (strain ATCC BAA-138 / DSM 3043 / CIP 106854 / NCIMB 13768 / 1H11) protein is Probable transcriptional regulatory protein Csal_0810.